Here is a 121-residue protein sequence, read N- to C-terminus: Large ribosomal subunit protein uL18 (121 aa).

It belongs to the universal ribosomal protein uL18 family. As to quaternary structure, part of the 50S ribosomal subunit; part of the 5S rRNA/L5/L18/L25 subcomplex. Contacts the 5S and 23S rRNAs.

Functionally, this is one of the proteins that bind and probably mediate the attachment of the 5S RNA into the large ribosomal subunit, where it forms part of the central protuberance. This chain is Large ribosomal subunit protein uL18, found in Streptococcus thermophilus (strain CNRZ 1066).